A 362-amino-acid chain; its full sequence is tRNA-specific 2-thiouridylase MnmA (362 aa).

Residues 6 to 13 (AMSGGVDS) and leucine 32 contribute to the ATP site. Cysteine 101 functions as the Nucleophile in the catalytic mechanism. An intrachain disulfide couples cysteine 101 to cysteine 197. An ATP-binding site is contributed by glycine 125. Residues 147 to 149 (KDQ) form an interaction with tRNA region. The active-site Cysteine persulfide intermediate is the cysteine 197.

Belongs to the MnmA/TRMU family.

The protein resides in the cytoplasm. The enzyme catalyses S-sulfanyl-L-cysteinyl-[protein] + uridine(34) in tRNA + AH2 + ATP = 2-thiouridine(34) in tRNA + L-cysteinyl-[protein] + A + AMP + diphosphate + H(+). Catalyzes the 2-thiolation of uridine at the wobble position (U34) of tRNA, leading to the formation of s(2)U34. This chain is tRNA-specific 2-thiouridylase MnmA, found in Acidothermus cellulolyticus (strain ATCC 43068 / DSM 8971 / 11B).